The sequence spans 347 residues: Phosphoribosylformylglycinamidine cyclo-ligase (347 aa).

The protein belongs to the AIR synthase family.

It localises to the cytoplasm. The enzyme catalyses 2-formamido-N(1)-(5-O-phospho-beta-D-ribosyl)acetamidine + ATP = 5-amino-1-(5-phospho-beta-D-ribosyl)imidazole + ADP + phosphate + H(+). Its pathway is purine metabolism; IMP biosynthesis via de novo pathway; 5-amino-1-(5-phospho-D-ribosyl)imidazole from N(2)-formyl-N(1)-(5-phospho-D-ribosyl)glycinamide: step 2/2. This is Phosphoribosylformylglycinamidine cyclo-ligase from Prochlorococcus marinus (strain MIT 9215).